The sequence spans 893 residues: Eukaryotic translation initiation factor 3 subunit A (893 aa).

The region spanning 319-502 (LQRMAAHVLL…NSIFFGTDLT (184 aa)) is the PCI domain. Coiled-coil stretches lie at residues 576–707 (QKII…RAKR) and 784–881 (EIAL…REVA). Disordered stretches follow at residues 592–634 (AREL…EIQA) and 837–893 (AEAR…RRRQ). The segment covering 837-881 (AEARRLEREAEDEKRRQQYEKQRAKEEEAERKIQEDRDRLAREVA) has biased composition (basic and acidic residues).

It belongs to the eIF-3 subunit A family. In terms of assembly, component of the eukaryotic translation initiation factor 3 (eIF-3) complex. The eIF-3 complex interacts with pix.

The protein resides in the cytoplasm. Functionally, RNA-binding component of the eukaryotic translation initiation factor 3 (eIF-3) complex, which is involved in protein synthesis of a specialized repertoire of mRNAs and, together with other initiation factors, stimulates binding of mRNA and methionyl-tRNAi to the 40S ribosome. The eIF-3 complex specifically targets and initiates translation of a subset of mRNAs involved in cell proliferation. This chain is Eukaryotic translation initiation factor 3 subunit A, found in Drosophila grimshawi (Hawaiian fruit fly).